Here is a 100-residue protein sequence, read N- to C-terminus: MAPPTCRLLSAALVLLLLLATNHQATGAVVASELRCQCLNTLPRVDFETIQSLTVTPPGPHCTQTEVIATLKDGQEVCLNPQGPRLQIIIKKILKSGKSS.

The N-terminal stretch at 1–31 is a signal peptide; it reads MAPPTCRLLSAALVLLLLLATNHQATGAVVA. 2 cysteine pairs are disulfide-bonded: cysteine 36–cysteine 62 and cysteine 38–cysteine 78.

The protein belongs to the intercrine alpha (chemokine CxC) family.

Its subcellular location is the secreted. In terms of biological role, ligand for CXCR2. Has chemotactic activity for neutrophils. May play a role in inflammation and exert its effects on endothelial cells in an autocrine fashion. In Mus musculus (Mouse), this protein is C-X-C motif chemokine 3.